The sequence spans 164 residues: Respiratory growth induced protein 2 (164 aa).

It belongs to the RGI1 family.

It is found in the cytoplasm. In terms of biological role, involved in the control of energetic metabolism and significantly contribute to cell fitness, especially under respiratory growth conditions. The sequence is that of Respiratory growth induced protein 2 (RGI2) from Saccharomyces cerevisiae (strain RM11-1a) (Baker's yeast).